We begin with the raw amino-acid sequence, 252 residues long: 5'-nucleotidase SurE (252 aa).

4 residues coordinate a divalent metal cation: Asp-8, Asp-9, Ser-39, and Asn-91.

Belongs to the SurE nucleotidase family. It depends on a divalent metal cation as a cofactor.

Its subcellular location is the cytoplasm. It catalyses the reaction a ribonucleoside 5'-phosphate + H2O = a ribonucleoside + phosphate. Its function is as follows. Nucleotidase that shows phosphatase activity on nucleoside 5'-monophosphates. This is 5'-nucleotidase SurE from Variovorax paradoxus (strain S110).